We begin with the raw amino-acid sequence, 122 residues long: Large ribosomal subunit protein bL12 (122 aa).

Belongs to the bacterial ribosomal protein bL12 family. As to quaternary structure, homodimer. Part of the ribosomal stalk of the 50S ribosomal subunit. Forms a multimeric L10(L12)X complex, where L10 forms an elongated spine to which 2 to 4 L12 dimers bind in a sequential fashion. Binds GTP-bound translation factors.

Forms part of the ribosomal stalk which helps the ribosome interact with GTP-bound translation factors. Is thus essential for accurate translation. This chain is Large ribosomal subunit protein bL12, found in Yersinia enterocolitica serotype O:8 / biotype 1B (strain NCTC 13174 / 8081).